Consider the following 247-residue polypeptide: MKIDVIISADYIDSESLKGKIAVVIDMLRATSVITTALYNGAKKVIPVVSVEEAFEKANELKSLGEEVLLGGERKALKIDGFDFSNSPLEYKREIVEGKNVIMSTTNGTRALNLCNKADKVIVASVLNGQAVAKYLENEEKEIVFVNSGTNGEFSSDDFMCAGYIISEICKNKEAELTDIAKTAKYVCESSEGIEEFIKDAKHYNILKNLGLEEDLKYCSTKNLIDLVFEFKNGEIKTVESGVKVTI.

This sequence belongs to the ComB family. Mg(2+) serves as cofactor.

It catalyses the reaction (2R)-O-phospho-3-sulfolactate + H2O = (2R)-3-sulfolactate + phosphate. The polypeptide is Probable 2-phosphosulfolactate phosphatase (Clostridium perfringens (strain 13 / Type A)).